Here is a 103-residue protein sequence, read N- to C-terminus: Glutaredoxin-C11 (103 aa).

The Glutaredoxin domain maps to 1–102 (MERIRDLSSK…QMLKDAKAIW (102 aa)). Residues Cys-21 and Cys-24 are joined by a disulfide bond.

The protein belongs to the glutaredoxin family. CC-type subfamily.

It is found in the cytoplasm. In terms of biological role, has a glutathione-disulfide oxidoreductase activity in the presence of NADPH and glutathione reductase. Reduces low molecular weight disulfides and proteins. This chain is Glutaredoxin-C11 (GRXC11), found in Arabidopsis thaliana (Mouse-ear cress).